Here is a 482-residue protein sequence, read N- to C-terminus: Ribosomal protein S6 kinase beta-2 (482 aa).

The disordered stretch occupies residues 1–26 (MAAVFDLDLETEEGSEGEGEPELSPA). Acidic residues predominate over residues 7–21 (LDLETEEGSEGEGEP). S15 is subject to Phosphoserine. One can recognise a Protein kinase domain in the interval 67 to 328 (FELLRVLGKG…AADVQRHPFF (262 aa)). ATP-binding positions include 73–81 (LGKGGYGKV) and K99. Catalysis depends on D194, which acts as the Proton acceptor. One can recognise an AGC-kinase C-terminal domain in the interval 329–399 (RHMNWDDLLA…VAPSVLDSIK (71 aa)). Residues 407-482 (KLRSPRRLNS…SKRGRGRPGR (76 aa)) form a disordered region. Phosphoserine is present on residues S417 and S423. The segment covering 437–466 (PSLPEPTELPLPPLLPPPPPSTTAPLPIRP) has biased composition (pro residues). The Nuclear localization signal motif lies at 471–477 (KKSKRGR). The span at 471–482 (KKSKRGRGRPGR) shows a compositional bias: basic residues. At S473 the chain carries Phosphoserine; by PKC.

It belongs to the protein kinase superfamily. AGC Ser/Thr protein kinase family. S6 kinase subfamily. Phosphorylated and activated by MTOR. Phosphorylation by PKC within the NLS in response to mitogenic stimuli causes cytoplasmic retention.

The protein localises to the cytoplasm. The protein resides in the nucleus. It catalyses the reaction L-seryl-[protein] + ATP = O-phospho-L-seryl-[protein] + ADP + H(+). The enzyme catalyses L-threonyl-[protein] + ATP = O-phospho-L-threonyl-[protein] + ADP + H(+). In terms of biological role, phosphorylates specifically ribosomal protein S6. Seems to act downstream of mTOR signaling in response to growth factors and nutrients to promote cell proliferation, cell growth and cell cycle progression in an alternative pathway regulated by MEAK7. The sequence is that of Ribosomal protein S6 kinase beta-2 (RPS6KB2) from Homo sapiens (Human).